The sequence spans 120 residues: QPAFSVVTRPTFYKLLKAGRDIGYDGTYTTSEDEWIANFTTGWSDQLSRRLSTRLPRLYTRNGKIVRICPSLEYLFLEASEPFTSRGITRHVAATTGCVQDLGTDLDFIRPGGAITGLCS.

Catalysis depends on Y24, which acts as the Proton acceptor; specific for L-alanine.

The protein belongs to the alanine racemase family. Homodimer. The cofactor is pyridoxal 5'-phosphate.

The catalysed reaction is L-alanine = D-alanine. Highly specific to D- and L-alanine and does not catalyze the racemization of other amino acids. The sequence is that of Alanine racemase from Penaeus monodon (Giant tiger prawn).